A 684-amino-acid polypeptide reads, in one-letter code: Phenoloxidase 2 (684 aa).

The propeptide occupies 1-50 (MADKKNLLLLFDHPTEPVFMDKGKRVTVFDVPDSFLTDRYRPISNEVQSR). Residues His208, His212, and His238 each contribute to the Cu cation site. Glu350 acts as the Proton acceptor in catalysis. Cu cation contacts are provided by His365, His369, and His405. Residues Asn448 and Asn492 are each glycosylated (N-linked (GlcNAc...) asparagine). 2 cysteine pairs are disulfide-bonded: Cys581/Cys623 and Cys583/Cys630. 2 N-linked (GlcNAc...) asparagine glycosylation sites follow: Asn665 and Asn677.

The protein belongs to the tyrosinase family. Cu(2+) serves as cofactor. In terms of processing, upon activation, a trypsin type protease cleaves prophenol oxidase to yield the active enzyme.

The protein resides in the secreted. It catalyses the reaction 2 L-dopa + O2 = 2 L-dopaquinone + 2 H2O. The catalysed reaction is L-tyrosine + O2 = L-dopaquinone + H2O. This is a copper-containing oxidase that functions in the formation of pigments such as melanins and other polyphenolic compounds. Catalyzes the rate-limiting conversions of tyrosine to DOPA, DOPA to DOPA-quinone and possibly 5,6 dihydroxyindole to indole-5'6 quinonee. This Drosophila melanogaster (Fruit fly) protein is Phenoloxidase 2 (PPO2).